Here is a 98-residue protein sequence, read N- to C-terminus: R.appendiculatus Kunitz/BPTI-like protein (98 aa).

A signal peptide spans 1 to 23 (MASTLKLFMLLPVILLLLQEAYG). 4 disulfides stabilise this stretch: Cys-36–Cys-51, Cys-43–Cys-83, Cys-49–Cys-96, and Cys-74–Cys-92.

Monomer. As to expression, expressed in salivary glands.

The protein localises to the secreted. Functionally, activates large conductance calcium-activated potassium channels (maxiK, KCNMA1/KCNMB), when tested at micromolar concentrations, suggesting a potential mechanism for regulating host blood supply during feeding. Shows no antiprotease activity, and does not prevent ADP-, PAF- or collagen-induced platelet aggregation. Has no effect on blood coagulation and does not inhibit the alternative or classical complement cascades. The sequence is that of R.appendiculatus Kunitz/BPTI-like protein from Rhipicephalus appendiculatus (Brown ear tick).